Consider the following 79-residue polypeptide: Conotoxin VnMKLT1-01122 (79 aa).

Residues 1–22 (MKLTCMKIVAVLFLTAWTFVTA) form the signal peptide. Positions 23-48 (DDSRNGLEYLFPKAHYEMNPEASKLN) are excised as a propeptide. At Q51 the chain carries Pyrrolidone carboxylic acid. 3 disulfides stabilise this stretch: C53–C70, C60–C74, and C69–C78.

The protein belongs to the conotoxin O1 superfamily. As to expression, expressed by the venom duct.

The protein localises to the secreted. This is Conotoxin VnMKLT1-01122 from Conus ventricosus (Mediterranean cone).